The sequence spans 544 residues: Methionine--tRNA ligase (544 aa).

A 'HIGH' region motif is present at residues 10 to 20 (PYANGSLHLGH). Cysteine 141, cysteine 144, cysteine 153, and cysteine 156 together coordinate Zn(2+). The 'KMSKS' region motif lies at 329–333 (KLSTS). Threonine 332 contacts ATP.

Belongs to the class-I aminoacyl-tRNA synthetase family. MetG type 1 subfamily. Monomer. The cofactor is Zn(2+).

It localises to the cytoplasm. It catalyses the reaction tRNA(Met) + L-methionine + ATP = L-methionyl-tRNA(Met) + AMP + diphosphate. Functionally, is required not only for elongation of protein synthesis but also for the initiation of all mRNA translation through initiator tRNA(fMet) aminoacylation. The chain is Methionine--tRNA ligase from Bacillus cereus (strain 03BB102).